We begin with the raw amino-acid sequence, 88 residues long: Small ribosomal subunit protein bS20 (88 aa).

Residues 1–27 are disordered; it reads MANSKSAKKRALQSEKRRQHNASRRSM.

The protein belongs to the bacterial ribosomal protein bS20 family.

Binds directly to 16S ribosomal RNA. The chain is Small ribosomal subunit protein bS20 from Shewanella sp. (strain ANA-3).